The following is a 176-amino-acid chain: Large ribosomal subunit protein uL16 (176 aa).

Belongs to the universal ribosomal protein uL16 family.

In Halorubrum lacusprofundi (strain ATCC 49239 / DSM 5036 / JCM 8891 / ACAM 34), this protein is Large ribosomal subunit protein uL16.